The primary structure comprises 96 residues: Small ribosomal subunit protein bS6 (96 aa).

This sequence belongs to the bacterial ribosomal protein bS6 family.

Functionally, binds together with bS18 to 16S ribosomal RNA. The chain is Small ribosomal subunit protein bS6 from Streptococcus sanguinis (strain SK36).